A 114-amino-acid chain; its full sequence is MHEITLSQRALEIIEQQAQQAGARRVTGVWLKVGAFSCVEASALTFCFELVCRGTLAEGCELHIAEQQAECWCDRCQQYVHLVSQHVRRCPHCNNDQLQIVADDGLQIQRLELE.

Histidine 2 contacts Ni(2+). Zn(2+) is bound by residues cysteine 73, cysteine 76, cysteine 90, and cysteine 93.

It belongs to the HypA/HybF family.

Its function is as follows. Involved in the maturation of [NiFe] hydrogenases. Required for nickel insertion into the metal center of the hydrogenase. The polypeptide is Hydrogenase maturation factor HypA (Klebsiella pneumoniae subsp. pneumoniae (strain ATCC 700721 / MGH 78578)).